Reading from the N-terminus, the 350-residue chain is Histidinol-phosphate aminotransferase (350 aa).

Position 210 is an N6-(pyridoxal phosphate)lysine (K210).

This sequence belongs to the class-II pyridoxal-phosphate-dependent aminotransferase family. Histidinol-phosphate aminotransferase subfamily. In terms of assembly, homodimer. Pyridoxal 5'-phosphate serves as cofactor.

The enzyme catalyses L-histidinol phosphate + 2-oxoglutarate = 3-(imidazol-4-yl)-2-oxopropyl phosphate + L-glutamate. Its pathway is amino-acid biosynthesis; L-histidine biosynthesis; L-histidine from 5-phospho-alpha-D-ribose 1-diphosphate: step 7/9. The chain is Histidinol-phosphate aminotransferase from Pseudomonas syringae pv. syringae (strain B728a).